The sequence spans 545 residues: Methionine--tRNA ligase (545 aa).

Residues 13–23 (PYANGPLHIGH) carry the 'HIGH' region motif. Zn(2+) is bound by residues C144, C147, C157, and C160. Positions 330–334 (KISKS) match the 'KMSKS' region motif. K333 is an ATP binding site.

The protein belongs to the class-I aminoacyl-tRNA synthetase family. MetG type 1 subfamily. Monomer. Zn(2+) is required as a cofactor.

Its subcellular location is the cytoplasm. The catalysed reaction is tRNA(Met) + L-methionine + ATP = L-methionyl-tRNA(Met) + AMP + diphosphate. Is required not only for elongation of protein synthesis but also for the initiation of all mRNA translation through initiator tRNA(fMet) aminoacylation. The polypeptide is Methionine--tRNA ligase (Blochmanniella floridana).